The primary structure comprises 1219 residues: MLVVNSLLKLLQRQTYTCLSHRYGLYLCFGGLVLMIVSAFQFGEVVVEWSRDQYHVLFDSYRDNVAGKSFQTRLCLPMPIDVVYTWVNGTDINLLKDLRAVRQRLEEEQKALRERLGKNGSEITEAPKGRPECLLSHCIMGPVLVLDPALPANITVKELPTLSAAFSSAKELLQVAKPLHPSSSVTALLFHSHTEAEKAHADALKDLLTHSISRGYLTTDKEAPGLVRMHTLAYLSGFPASLKETEQLRVKLPAVVTSKTKKLQLYSEASIALLHLNTAQDFTDLTQQAKKNLTLDGKELTVSSAFLFWDLTAISQSKQDEDVSASRFEDNEELRYSLRSIEKHAPWVRHIFIVTNGQIPSWLNLDNPRVSVVTHQDIFQNQTHLPTFSSPAIETHIHRIPGLSQKFIYLNDDVMFGKDVWPDDFYSHSKGQKVYLTWPVPNCAEGCPGSWIKDGYCDKACNNSACDWDGGDCQGSSRFGGAGGSVIGGGQPWQFAGGLGGLAGMSFCNQGCANSWLADKFCDQACNVLACGFDVGDCGQDNLNQLHRIVLRRNQTLYTLPQGELRPYFSFSGLANRVSEAHVADNQVLRHTSVANKWKTIHLLLLPGHNATQIHYNITFQSTDHHDFIMTFSVSVDTRELPKSNTSTPVRDKEEEPKPTVATPEPEVPFEAVPKEKQGPKVREQTHGDVQVPVLNETLLPDEVKIELKKLNEKLMSGDITIKGFNLTKAMLLEPYKEKDQFTLKHEKDKEEKQKLSPVAQLQNERAAARVKREKGENVDQLKPVAPSLVPVQIDDVTTKAQSRLFNIEKPHMFHLLSNLKGNLSKERDSDSEGHLRERPTGRRLQFYSDSLNRGFLPWEKRKFFQDLMEEVNRLQTELQYTADRTATGRRLQDTFADSLRYVNRLLNAQFGFTSRKVPAHMPHMIDRLIMQELQDTFPQEFDKTSSHRVRHSEDMQFAFSYFYFLMSAVQQLNISEVFDEIDTDHSGVLSDREIRTLATRIHELPLSLQDLTSLEQMLINCSKSLPSNLTHLHAVSPTQEAYYDPSMPPVTKGLVIHCKPITERIHKAFKDQNKYKFEIMGEEEIAFKMIRTNVSHVVGQLDDIRKNPRKFICLNDNIDHIHKDAGTVKAVLRDFYESMFPLPSQFELPREYRNRFLHMTELQEWRIYRDKLKFWTHCVLVTLVVFTVMSFFAEQLVMLKRWLFPRRRVSKDANPERV.

A helical transmembrane segment spans residues 27-47 (LCFGGLVLMIVSAFQFGEVVV). 5 N-linked (GlcNAc...) asparagine glycosylation sites follow: Asn88, Asn119, Asn153, Asn292, and Asn381. 4 disulfides stabilise this stretch: Cys443-Cys466, Cys457-Cys473, Cys508-Cys531, and Cys522-Cys538. LNR repeat units follow at residues 443 to 478 (CAEG…GSSR) and 508 to 538 (CNQG…VGDC). Asp454 is a binding site for Ca(2+). Asn462 carries N-linked (GlcNAc...) asparagine glycosylation. The Ca(2+) site is built by Asp469, Asp472, Asp519, Asp534, and Asp537. N-linked (GlcNAc...) asparagine glycans are attached at residues Asn554, Asn610, Asn617, Asn645, Asn696, Asn726, Asn823, and Asn974. The interval 640-666 (ELPKSNTSTPVRDKEEEPKPTVATPEP) is disordered. In terms of domain architecture, DMAP1-binding spans 696 to 804 (NETLLPDEVK…DDVTTKAQSR (109 aa)). The EF-hand domain occupies 970–1005 (VQQLNISEVFDEIDTDHSGVLSDREIRTLATRIHEL). Ca(2+) is bound by residues Asp983, Asp985, Ser987, and Glu994. N-linked (GlcNAc...) asparagine glycans are attached at residues Asn1021, Asn1029, and Asn1094. A helical membrane pass occupies residues 1180-1200 (VLVTLVVFTVMSFFAEQLVML).

The protein belongs to the stealth family. In terms of assembly, hexamer of two alpha, two beta and two gamma (GNPTG) subunits; disulfide-linked. The alpha and/or the beta subunits of the enzyme constitute the catalytic subunits. The alpha- and beta-subunits are generated by a proteolytic cleavage by mbtps1 protease at the Gln-893-Asp-894 bond.

It is found in the golgi apparatus membrane. It catalyses the reaction N(4)-[alpha-D-mannosyl-(1-&gt;2)-alpha-D-mannosyl-(glycan)]-L-asparaginyl-[protein] + UDP-N-acetyl-alpha-D-glucosamine = N(4)-[6-(N-acetyl-alpha-D-glucosaminyl-1-phospho)-alpha-D-mannosyl-(1-&gt;2)-alpha-D-mannosyl-(glycan)]-L-asparaginyl-[protein] + UMP + H(+). In terms of biological role, catalyzes the formation of mannose 6-phosphate (M6P) markers on high mannose type oligosaccharides in the Golgi apparatus. M6P residues are required to bind to the M6P receptors (MPR), which mediate the vesicular transport of lysosomal enzymes to the endosomal/prelysosomal compartment. The sequence is that of N-acetylglucosamine-1-phosphotransferase subunits alpha/beta (gnptab) from Danio rerio (Zebrafish).